A 425-amino-acid chain; its full sequence is Serine--tRNA ligase (425 aa).

L-serine is bound at residue 233–235 (TAE). Residue 264 to 266 (RRE) coordinates ATP. E287 provides a ligand contact to L-serine. 351 to 354 (EISS) contributes to the ATP binding site. S387 contacts L-serine.

It belongs to the class-II aminoacyl-tRNA synthetase family. Type-1 seryl-tRNA synthetase subfamily. In terms of assembly, homodimer. The tRNA molecule binds across the dimer.

The protein localises to the cytoplasm. It carries out the reaction tRNA(Ser) + L-serine + ATP = L-seryl-tRNA(Ser) + AMP + diphosphate + H(+). The catalysed reaction is tRNA(Sec) + L-serine + ATP = L-seryl-tRNA(Sec) + AMP + diphosphate + H(+). It functions in the pathway aminoacyl-tRNA biosynthesis; selenocysteinyl-tRNA(Sec) biosynthesis; L-seryl-tRNA(Sec) from L-serine and tRNA(Sec): step 1/1. Catalyzes the attachment of serine to tRNA(Ser). Is also able to aminoacylate tRNA(Sec) with serine, to form the misacylated tRNA L-seryl-tRNA(Sec), which will be further converted into selenocysteinyl-tRNA(Sec). This is Serine--tRNA ligase from Thermotoga sp. (strain RQ2).